A 3001-amino-acid chain; its full sequence is BEACH domain-containing protein C2 (3001 aa).

Disordered regions lie at residues 43-80, 103-156, 1018-1076, 1846-1868, 2039-2071, 2101-2132, and 2193-2212; these read DFEQ…SSFG, DVQS…KATV, NVLA…NVGS, TFSS…PRDK, YSGT…SNPP, AEEH…RTSN, and NLAD…DRSW. Ser-48 carries the phosphoserine modification. Polar residues-rich tracts occupy residues 57–72, 121–132, and 1037–1050; these read NESQ…FSNS, SMQQSLSETSLD, and SPYN…QLDS. The segment covering 1854–1863 has biased composition (pro residues); it reads LEPPNNNAPP. A compositionally biased stretch (basic and acidic residues) spans 2101 to 2119; sequence AEEHKRDEGRISGSHEHAS. Polar residues predominate over residues 2120–2129; that stretch reads RTSAGNSDPR. Residues 2151-2260 enclose the BEACH-type PH domain; the sequence is ELDERILLEL…GRRNAYRAIV (110 aa). A compositionally biased stretch (basic and acidic residues) spans 2196–2211; that stretch reads DHSDESQSGDQEKDRS. In terms of domain architecture, BEACH spans 2275-2564; it reads QRPEQLLRRT…QLLTVPHMKR (290 aa). WD repeat units lie at residues 2679 to 2718, 2721 to 2760, 2802 to 2841, 2842 to 2881, and 2953 to 2992; these read SGIR…TLET, GHCA…TSRT, GHRR…LIRR, LVGV…IAKA, and GQGQ…LKVV.

This chain is BEACH domain-containing protein C2, found in Arabidopsis thaliana (Mouse-ear cress).